A 156-amino-acid polypeptide reads, in one-letter code: D-aminoacyl-tRNA deacylase (156 aa).

The short motif at 142–143 is the Gly-cisPro motif, important for rejection of L-amino acids element; the sequence is GP.

The protein belongs to the DTD family. In terms of assembly, homodimer.

It is found in the cytoplasm. The catalysed reaction is glycyl-tRNA(Ala) + H2O = tRNA(Ala) + glycine + H(+). It carries out the reaction a D-aminoacyl-tRNA + H2O = a tRNA + a D-alpha-amino acid + H(+). An aminoacyl-tRNA editing enzyme that deacylates mischarged D-aminoacyl-tRNAs. Also deacylates mischarged glycyl-tRNA(Ala), protecting cells against glycine mischarging by AlaRS. Acts via tRNA-based rather than protein-based catalysis; rejects L-amino acids rather than detecting D-amino acids in the active site. By recycling D-aminoacyl-tRNA to D-amino acids and free tRNA molecules, this enzyme counteracts the toxicity associated with the formation of D-aminoacyl-tRNA entities in vivo and helps enforce protein L-homochirality. The protein is D-aminoacyl-tRNA deacylase of Cupriavidus pinatubonensis (strain JMP 134 / LMG 1197) (Cupriavidus necator (strain JMP 134)).